The following is a 193-amino-acid chain: Holliday junction branch migration complex subunit RuvA (193 aa).

Residues 1-64 form a domain I region; it reads MIGRIAGTLL…EDAHLLYGFL (64 aa). The domain II stretch occupies residues 65 to 139; it reads TPQERSTFRE…GKLGADLGPL (75 aa). Residues 139 to 143 are flexible linker; it reads LAGAA. The tract at residues 144 to 193 is domain III; it reads SPSDHAADILNALLALGYSEKEALAAIKNVPAGTGVSEGIKLSLKALSKA.

It belongs to the RuvA family. Homotetramer. Forms an RuvA(8)-RuvB(12)-Holliday junction (HJ) complex. HJ DNA is sandwiched between 2 RuvA tetramers; dsDNA enters through RuvA and exits via RuvB. An RuvB hexamer assembles on each DNA strand where it exits the tetramer. Each RuvB hexamer is contacted by two RuvA subunits (via domain III) on 2 adjacent RuvB subunits; this complex drives branch migration. In the full resolvosome a probable DNA-RuvA(4)-RuvB(12)-RuvC(2) complex forms which resolves the HJ.

Its subcellular location is the cytoplasm. The RuvA-RuvB-RuvC complex processes Holliday junction (HJ) DNA during genetic recombination and DNA repair, while the RuvA-RuvB complex plays an important role in the rescue of blocked DNA replication forks via replication fork reversal (RFR). RuvA specifically binds to HJ cruciform DNA, conferring on it an open structure. The RuvB hexamer acts as an ATP-dependent pump, pulling dsDNA into and through the RuvAB complex. HJ branch migration allows RuvC to scan DNA until it finds its consensus sequence, where it cleaves and resolves the cruciform DNA. The polypeptide is Holliday junction branch migration complex subunit RuvA (Burkholderia thailandensis (strain ATCC 700388 / DSM 13276 / CCUG 48851 / CIP 106301 / E264)).